We begin with the raw amino-acid sequence, 476 residues long: Cysteine--tRNA ligase (476 aa).

Residue C36 participates in Zn(2+) binding. Positions 38 to 48 match the 'HIGH' region motif; that stretch reads PTVYDYAHIGN. Residues C221, H246, and E250 each coordinate Zn(2+). The short motif at 278 to 282 is the 'KMSKS' region element; sequence KMSKS. K281 serves as a coordination point for ATP.

The protein belongs to the class-I aminoacyl-tRNA synthetase family. As to quaternary structure, monomer. Zn(2+) is required as a cofactor.

The protein resides in the cytoplasm. The enzyme catalyses tRNA(Cys) + L-cysteine + ATP = L-cysteinyl-tRNA(Cys) + AMP + diphosphate. This chain is Cysteine--tRNA ligase, found in Chlamydia abortus (strain DSM 27085 / S26/3) (Chlamydophila abortus).